Reading from the N-terminus, the 129-residue chain is Thylakoid-associated single-stranded DNA-binding protein slr1034 (129 aa).

Residues Met-1–Asp-100 form the SSB domain. A disordered region spans residues Val-99–Phe-129.

In terms of assembly, homotetramer.

Its subcellular location is the cellular thylakoid membrane. The polypeptide is Thylakoid-associated single-stranded DNA-binding protein slr1034 (Synechocystis sp. (strain ATCC 27184 / PCC 6803 / Kazusa)).